The chain runs to 950 residues: Glycine dehydrogenase (decarboxylating) (950 aa).

N6-(pyridoxal phosphate)lysine is present on Lys698.

This sequence belongs to the GcvP family. The glycine cleavage system is composed of four proteins: P, T, L and H. It depends on pyridoxal 5'-phosphate as a cofactor.

It carries out the reaction N(6)-[(R)-lipoyl]-L-lysyl-[glycine-cleavage complex H protein] + glycine + H(+) = N(6)-[(R)-S(8)-aminomethyldihydrolipoyl]-L-lysyl-[glycine-cleavage complex H protein] + CO2. Its function is as follows. The glycine cleavage system catalyzes the degradation of glycine. The P protein binds the alpha-amino group of glycine through its pyridoxal phosphate cofactor; CO(2) is released and the remaining methylamine moiety is then transferred to the lipoamide cofactor of the H protein. The protein is Glycine dehydrogenase (decarboxylating) of Neisseria gonorrhoeae (strain NCCP11945).